We begin with the raw amino-acid sequence, 204 residues long: Elongation factor Ts (204 aa).

The tract at residues Thr-87–Val-90 is involved in Mg(2+) ion dislocation from EF-Tu.

It belongs to the EF-Ts family.

The protein resides in the cytoplasm. Functionally, associates with the EF-Tu.GDP complex and induces the exchange of GDP to GTP. It remains bound to the aminoacyl-tRNA.EF-Tu.GTP complex up to the GTP hydrolysis stage on the ribosome. This Frankia casuarinae (strain DSM 45818 / CECT 9043 / HFP020203 / CcI3) protein is Elongation factor Ts.